Consider the following 540-residue polypeptide: CTP synthase (540 aa).

Residues 1–266 (MAVKYIFVTG…LTPIARHLEL (266 aa)) are amidoligase domain. Ser-14 provides a ligand contact to CTP. UTP is bound at residue Ser-14. Residues 15–20 (SLGKGI) and Asp-72 each bind ATP. Residues Asp-72 and Glu-140 each contribute to the Mg(2+) site. CTP contacts are provided by residues 147–149 (DIE), 187–192 (KTKPTQ), and Lys-223. Residues 187-192 (KTKPTQ) and Lys-223 each bind UTP. Positions 291–540 (TIGFVGKYLS…VKETLAHKKT (250 aa)) constitute a Glutamine amidotransferase type-1 domain. Position 351 (Gly-351) interacts with L-glutamine. Cys-378 serves as the catalytic Nucleophile; for glutamine hydrolysis. L-glutamine contacts are provided by residues 379–382 (LGMQ), Glu-402, and Arg-470. Active-site residues include His-513 and Glu-515.

It belongs to the CTP synthase family. As to quaternary structure, homotetramer.

It catalyses the reaction UTP + L-glutamine + ATP + H2O = CTP + L-glutamate + ADP + phosphate + 2 H(+). It carries out the reaction L-glutamine + H2O = L-glutamate + NH4(+). The enzyme catalyses UTP + NH4(+) + ATP = CTP + ADP + phosphate + 2 H(+). Its pathway is pyrimidine metabolism; CTP biosynthesis via de novo pathway; CTP from UDP: step 2/2. Its activity is regulated as follows. Allosterically activated by GTP, when glutamine is the substrate; GTP has no effect on the reaction when ammonia is the substrate. The allosteric effector GTP functions by stabilizing the protein conformation that binds the tetrahedral intermediate(s) formed during glutamine hydrolysis. Inhibited by the product CTP, via allosteric rather than competitive inhibition. Catalyzes the ATP-dependent amination of UTP to CTP with either L-glutamine or ammonia as the source of nitrogen. Regulates intracellular CTP levels through interactions with the four ribonucleotide triphosphates. In Helicobacter hepaticus (strain ATCC 51449 / 3B1), this protein is CTP synthase.